A 512-amino-acid polypeptide reads, in one-letter code: Probable cobyric acid synthase (512 aa).

The region spanning 275 to 460 is the GATase cobBQ-type domain; the sequence is SVTVAVPHLP…LHGLFGNDAA (186 aa). C353 (nucleophile) is an active-site residue. Residue H452 is part of the active site.

Belongs to the CobB/CobQ family. CobQ subfamily.

The protein operates within cofactor biosynthesis; adenosylcobalamin biosynthesis. In terms of biological role, catalyzes amidations at positions B, D, E, and G on adenosylcobyrinic A,C-diamide. NH(2) groups are provided by glutamine, and one molecule of ATP is hydrogenolyzed for each amidation. The chain is Probable cobyric acid synthase from Halobacterium salinarum (strain ATCC 29341 / DSM 671 / R1).